Here is a 631-residue protein sequence, read N- to C-terminus: Glutamyl-tRNA(Gln) amidotransferase subunit E (631 aa).

It belongs to the GatB/GatE family. GatE subfamily. As to quaternary structure, heterodimer of GatD and GatE.

It carries out the reaction L-glutamyl-tRNA(Gln) + L-glutamine + ATP + H2O = L-glutaminyl-tRNA(Gln) + L-glutamate + ADP + phosphate + H(+). Allows the formation of correctly charged Gln-tRNA(Gln) through the transamidation of misacylated Glu-tRNA(Gln) in organisms which lack glutaminyl-tRNA synthetase. The reaction takes place in the presence of glutamine and ATP through an activated gamma-phospho-Glu-tRNA(Gln). The GatDE system is specific for glutamate and does not act on aspartate. This Methanococcus maripaludis (strain C6 / ATCC BAA-1332) protein is Glutamyl-tRNA(Gln) amidotransferase subunit E.